The primary structure comprises 553 residues: Glucose-6-phosphate isomerase (553 aa).

Glutamate 355 (proton donor) is an active-site residue. Catalysis depends on residues histidine 386 and lysine 513.

The protein belongs to the GPI family.

It localises to the cytoplasm. It catalyses the reaction alpha-D-glucose 6-phosphate = beta-D-fructose 6-phosphate. It functions in the pathway carbohydrate biosynthesis; gluconeogenesis. The protein operates within carbohydrate degradation; glycolysis; D-glyceraldehyde 3-phosphate and glycerone phosphate from D-glucose: step 2/4. Its function is as follows. Catalyzes the reversible isomerization of glucose-6-phosphate to fructose-6-phosphate. The sequence is that of Glucose-6-phosphate isomerase from Baumannia cicadellinicola subsp. Homalodisca coagulata.